We begin with the raw amino-acid sequence, 929 residues long: Protocadherin gamma-B7 (929 aa).

A signal peptide spans 1–30 (MGGSCAQRRRAGPRQVLFPLLLPLFYPTLC). 6 Cadherin domains span residues 31 to 133 (EPIR…APQF), 134 to 242 (QKDE…PPVF), 243 to 347 (SQDV…SPEI), 348 to 452 (IITS…APVF), 453 to 562 (GQSA…APRV), and 570 to 675 (DGSA…LPDF). Topologically, residues 31–691 (EPIRYSIPEE…SDSQAEMQFY (661 aa)) are extracellular. Asn-419 and Asn-545 each carry an N-linked (GlcNAc...) asparagine glycan. Residues 692–712 (LVVALALISVLFLLAVILAIA) traverse the membrane as a helical segment. The Cytoplasmic portion of the chain corresponds to 713–929 (LRLRQSFSPT…KKKSGKKEKK (217 aa)). 2 disordered regions span residues 806–838 (QAPPNTDWRFSQAQRPGTSGSQNGDDTGTWPNN) and 899–929 (ATLTNAAGKRDGKAPAGGNGNKKKSGKKEKK). A compositionally biased stretch (polar residues) spans 807–838 (APPNTDWRFSQAQRPGTSGSQNGDDTGTWPNN). The span at 919 to 929 (NKKKSGKKEKK) shows a compositional bias: basic residues.

Its subcellular location is the cell membrane. In terms of biological role, potential calcium-dependent cell-adhesion protein. May be involved in the establishment and maintenance of specific neuronal connections in the brain. The polypeptide is Protocadherin gamma-B7 (PCDHGB7) (Pan troglodytes (Chimpanzee)).